We begin with the raw amino-acid sequence, 367 residues long: Di-N-acetylchitobiase (367 aa).

The signal sequence occupies residues 1–23 (MALSDLLELTLLLLLPLLERLSA). The region spanning 24–367 (EDCPCSEASL…EMWGALRPRL (344 aa)) is the GH18 domain. Catalysis depends on E128, which acts as the Proton donor. N-linked (GlcNAc...) asparagine glycans are attached at residues N178, N213, N247, and N284.

The protein belongs to the glycosyl hydrolase 18 family.

Its subcellular location is the lysosome. Functionally, involved in the degradation of asparagine-linked glycoproteins. Hydrolyze of N-acetyl-beta-D-glucosamine (1-4)N-acetylglucosamine chitobiose core from the reducing end of the bond, it requires prior cleavage by glycosylasparaginase. The protein is Di-N-acetylchitobiase (Ctbs) of Rattus norvegicus (Rat).